Consider the following 271-residue polypeptide: Formamidopyrimidine-DNA glycosylase (271 aa).

P2 acts as the Schiff-base intermediate with DNA in catalysis. Residue E3 is the Proton donor of the active site. K58 (proton donor; for beta-elimination activity) is an active-site residue. Residues H92, R111, and K152 each contribute to the DNA site. The FPG-type zinc-finger motif lies at 237–271 (YVYGKVQKPCKICNNIITLIRQNGRSTYFCNACQN). Residue R261 is the Proton donor; for delta-elimination activity of the active site.

This sequence belongs to the FPG family. Monomer. Zn(2+) is required as a cofactor.

It carries out the reaction Hydrolysis of DNA containing ring-opened 7-methylguanine residues, releasing 2,6-diamino-4-hydroxy-5-(N-methyl)formamidopyrimidine.. It catalyses the reaction 2'-deoxyribonucleotide-(2'-deoxyribose 5'-phosphate)-2'-deoxyribonucleotide-DNA = a 3'-end 2'-deoxyribonucleotide-(2,3-dehydro-2,3-deoxyribose 5'-phosphate)-DNA + a 5'-end 5'-phospho-2'-deoxyribonucleoside-DNA + H(+). Functionally, involved in base excision repair of DNA damaged by oxidation or by mutagenic agents. Acts as a DNA glycosylase that recognizes and removes damaged bases. Has a preference for oxidized purines, such as 7,8-dihydro-8-oxoguanine (8-oxoG). Has AP (apurinic/apyrimidinic) lyase activity and introduces nicks in the DNA strand. Cleaves the DNA backbone by beta-delta elimination to generate a single-strand break at the site of the removed base with both 3'- and 5'-phosphates. The protein is Formamidopyrimidine-DNA glycosylase of Wolbachia sp. subsp. Drosophila simulans (strain wRi).